Reading from the N-terminus, the 304-residue chain is Sulfate adenylyltransferase subunit 2 (304 aa).

It belongs to the PAPS reductase family. CysD subfamily. Heterodimer composed of CysD, the smaller subunit, and CysNC.

The enzyme catalyses sulfate + ATP + H(+) = adenosine 5'-phosphosulfate + diphosphate. It functions in the pathway sulfur metabolism; hydrogen sulfide biosynthesis; sulfite from sulfate: step 1/3. In terms of biological role, with CysN forms the ATP sulfurylase (ATPS) that catalyzes the adenylation of sulfate producing adenosine 5'-phosphosulfate (APS) and diphosphate, the first enzymatic step in sulfur assimilation pathway. APS synthesis involves the formation of a high-energy phosphoric-sulfuric acid anhydride bond driven by GTP hydrolysis by CysN coupled to ATP hydrolysis by CysD. The chain is Sulfate adenylyltransferase subunit 2 from Xylella fastidiosa (strain Temecula1 / ATCC 700964).